Consider the following 1501-residue polypeptide: MSDSKMSSQDESKLEKAISQDSSSENHSINEYHGFDAHTSENIQNLARTFTHDSFKDDSSAGLLKYLTHMSEVPGVNPYEHEEINNDQLNPDSENFNAKFWVKNLRKLFESDPEYYKPSKLGIGYRNLRAYGVANDSDYQPTVTNALWKLATEGFRHFQKDDDSRYFDILKSMDAIMRPGELTVVLGRPGAGCSTLLKTIAVNTYGFHIGKESQITYDGLSPHDIERHYRGDVIYSAETDVHFPHLSVGDTLEFAARLRTPQNRGEGIDRETYAKHMASVYMATYGLSHTRNTNVGNDFVRGVSGGERKRVSIAEASLSGANIQCWDNATRGLDSATALEFIRALKTSAVILDTTPLIAIYQCSQDAYDLFDKVVVLYEGYQIFFGKATKAKEYFEKMGWKCPQRQTTADFLTSLTNPAEREPLPGYEDKVPRTAQEFETYWKNSPEYAELTKEIDEYFVECERSNTRETYRESHVAKQSNNTRPASPYTVSFFMQVRYGVARNFLRMKGDPSIPIFSVFGQLVMGLILSSVFYNLSQTTGSFYYRGAAMFFAVLFNAFSSLLEIMSLFEARPIVEKHKKYALYRPSADALASIISELPVKLAMSMSFNFVFYFMVNFRRNPGRFFFYWLMCIWCTFVMSHLFRSIGAVSTSISGAMTPATVLLLAMVIYTGFVIPTPSMLGWSRWINYINPVGYVFESLMVNEFHGREFQCAQYVPSGPGYENISRSNQVCTAVGSVPGNEMVSGTNYLAGAYQYYNSHKWRNLGITIGFAVFFLAIYIALTEFNKGAMQKGEIVLFLKGSLKKHKRKTAASNKGDIEAGPVAGKLDYQDEAEAVNNEKFTEKGSTGSVDFPENREIFFWRDLTYQVKIKKEDRVILDHVDGWVKPGQITALMGASGAGKTTLLNCLSERVTTGIITDGERLVNGHALDSSFQRSIGYVQQQDVHLETTTVREALQFSAYLRQSNKISKKEKDDYVDYVIDLLEMTDYADALVGVAGEGLNVEQRKRLTIGVELVAKPKLLLFLDEPTSGLDSQTAWSICKLMRKLADHGQAILCTIHQPSALIMAEFDRLLFLQKGGRTAYFGELGENCQTMINYFEKYGADPCPKEANPAEWMLQVVGAAPGSHAKQDYFEVWRNSSEYQAVREEINRMEAELSKLPRDNDPEALLKYAAPLWKQYLLVSWRTIVQDWRSPGYIYSKIFLVVSAALFNGFSFFKAKNNMQGLQNQMFSVFMFFIPFNTLVQQMLPYFVKQRDVYEVREAPSRTFSWFAFIAGQITSEIPYQVAVGTIAFFCWYYPLGLYNNATPTDSVNPRGVLMWMLVTAFYVYTATMGQLCMSFSELADNAANLATLLFTMCLNFCGVLAGPDVLPGFWIFMYRCNPFTYLVQAMLSTGLANTFVKCAEREYVSVKPPNGESCSTYLDPYIKFAGGYFETRNDGSCAFCQMSSTNTFLKSVNSLYSERWRNFGIFIAFIAINIILTVIFYWLARVPKGNREKKNKK.

Positions 1–30 (MSDSKMSSQDESKLEKAISQDSSSENHSIN) are disordered. Residues 1–513 (MSDSKMSSQD…NFLRMKGDPS (513 aa)) are Cytoplasmic-facing. The tract at residues 2–512 (SDSKMSSQDE…RNFLRMKGDP (511 aa)) is NBD1. The segment covering 8 to 18 (SQDESKLEKAI) has biased composition (basic and acidic residues). An ABC transporter 1 domain is found at 150 to 404 (LATEGFRHFQ…FEKMGWKCPQ (255 aa)). The helical transmembrane segment at 514–534 (IPIFSVFGQLVMGLILSSVFY) threads the bilayer. Residues 535 to 548 (NLSQTTGSFYYRGA) are Extracellular-facing. The helical transmembrane segment at 549-569 (AMFFAVLFNAFSSLLEIMSLF) threads the bilayer. Residues 570–597 (EARPIVEKHKKYALYRPSADALASIISE) are Cytoplasmic-facing. The chain crosses the membrane as a helical span at residues 598–618 (LPVKLAMSMSFNFVFYFMVNF). Topologically, residues 619 to 622 (RRNP) are extracellular. Residues 623–643 (GRFFFYWLMCIWCTFVMSHLF) form a helical membrane-spanning segment. Residues 644-654 (RSIGAVSTSIS) are Cytoplasmic-facing. A helical membrane pass occupies residues 655–675 (GAMTPATVLLLAMVIYTGFVI). Residues 676–764 (PTPSMLGWSR…QYYNSHKWRN (89 aa)) are Extracellular-facing. The helical transmembrane segment at 765-785 (LGITIGFAVFFLAIYIALTEF) threads the bilayer. At 786-1195 (NKGAMQKGEI…TIVQDWRSPG (410 aa)) the chain is on the cytoplasmic side. Positions 786–1195 (NKGAMQKGEI…TIVQDWRSPG (410 aa)) are NBD2. The ABC transporter 2 domain occupies 859–1103 (FFWRDLTYQV…MINYFEKYGA (245 aa)). 895 to 902 (GASGAGKT) serves as a coordination point for ATP. Residues 1137–1164 (RNSSEYQAVREEINRMEAELSKLPRDND) adopt a coiled-coil conformation. The helical transmembrane segment at 1196 to 1216 (YIYSKIFLVVSAALFNGFSFF) threads the bilayer. At 1217 to 1229 (KAKNNMQGLQNQM) the chain is on the extracellular side. The chain crosses the membrane as a helical span at residues 1230–1250 (FSVFMFFIPFNTLVQQMLPYF). Over 1251 to 1280 (VKQRDVYEVREAPSRTFSWFAFIAGQITSE) the chain is Cytoplasmic. The chain crosses the membrane as a helical span at residues 1281-1301 (IPYQVAVGTIAFFCWYYPLGL). Topologically, residues 1302–1314 (YNNATPTDSVNPR) are extracellular. Residues 1315-1335 (GVLMWMLVTAFYVYTATMGQL) form a helical membrane-spanning segment. At 1336–1355 (CMSFSELADNAANLATLLFT) the chain is on the cytoplasmic side. A helical transmembrane segment spans residues 1356–1376 (MCLNFCGVLAGPDVLPGFWIF). At 1377 to 1466 (MYRCNPFTYL…NSLYSERWRN (90 aa)) the chain is on the extracellular side. Residues 1467–1487 (FGIFIAFIAINIILTVIFYWL) form a helical membrane-spanning segment. Topologically, residues 1488-1501 (ARVPKGNREKKNKK) are cytoplasmic.

Belongs to the ABC transporter superfamily.

Its subcellular location is the cell membrane. Its activity is regulated as follows. Disulfiram reverses CDR1-mediated drug resistance by interaction with both ATP and substrate-binding sites of the transporter and may be useful for antifungal therapy. Its function is as follows. Pleiotropic ABC efflux transporter that confers resistance to numerous chemicals including anisomycin, cycloheximide, fluconazole, miconazole, ketoconazole, itriconazole, nystatin, terbinafine, amorolfine, brefeldin A, amphotericin B, fluphenazine, as well as estrogen. Plays a role in farnesol-induced apoptotic process through glutathione efflux activity. Mediates in-to-out translocation of membrane phospholipids including aminophospholipids and thus regulates asymmetric distribution of phosphatidylethanolamine. Exhibits nucleoside triphosphatase activity. The polypeptide is Pleiotropic ABC efflux transporter of multiple drugs CDR1 (CDR1) (Candida albicans (strain SC5314 / ATCC MYA-2876) (Yeast)).